The following is a 266-amino-acid chain: Glucosamine-6-phosphate deaminase (266 aa).

Aspartate 72 acts as the Proton acceptor; for enolization step in catalysis. The active-site For ring-opening step is the aspartate 141. Residue histidine 143 is the Proton acceptor; for ring-opening step of the active site. Residue glutamate 148 is the For ring-opening step of the active site.

The protein belongs to the glucosamine/galactosamine-6-phosphate isomerase family. NagB subfamily. Homohexamer.

The catalysed reaction is alpha-D-glucosamine 6-phosphate + H2O = beta-D-fructose 6-phosphate + NH4(+). The protein operates within amino-sugar metabolism; N-acetylneuraminate degradation; D-fructose 6-phosphate from N-acetylneuraminate: step 5/5. Allosterically activated by N-acetylglucosamine 6-phosphate (GlcNAc6P). Functionally, catalyzes the reversible isomerization-deamination of glucosamine 6-phosphate (GlcN6P) to form fructose 6-phosphate (Fru6P) and ammonium ion. The protein is Glucosamine-6-phosphate deaminase of Cronobacter sakazakii (strain ATCC BAA-894) (Enterobacter sakazakii).